We begin with the raw amino-acid sequence, 109 residues long: Large ribosomal subunit protein uL22 (109 aa).

Belongs to the universal ribosomal protein uL22 family. In terms of assembly, part of the 50S ribosomal subunit.

This protein binds specifically to 23S rRNA; its binding is stimulated by other ribosomal proteins, e.g. L4, L17, and L20. It is important during the early stages of 50S assembly. It makes multiple contacts with different domains of the 23S rRNA in the assembled 50S subunit and ribosome. In terms of biological role, the globular domain of the protein is located near the polypeptide exit tunnel on the outside of the subunit, while an extended beta-hairpin is found that lines the wall of the exit tunnel in the center of the 70S ribosome. The sequence is that of Large ribosomal subunit protein uL22 from Bordetella petrii (strain ATCC BAA-461 / DSM 12804 / CCUG 43448).